The sequence spans 130 residues: Small ribosomal subunit protein uS8 (130 aa).

This sequence belongs to the universal ribosomal protein uS8 family. In terms of assembly, part of the 30S ribosomal subunit. Contacts proteins S5 and S12.

One of the primary rRNA binding proteins, it binds directly to 16S rRNA central domain where it helps coordinate assembly of the platform of the 30S subunit. This is Small ribosomal subunit protein uS8 from Cronobacter sakazakii (strain ATCC BAA-894) (Enterobacter sakazakii).